Consider the following 265-residue polypeptide: Mlc titration factor A (265 aa).

Positions 111, 148, 152, and 211 each coordinate Zn(2+).

The protein belongs to the MtfA family. As to quaternary structure, interacts with Mlc. It depends on Zn(2+) as a cofactor.

It is found in the cytoplasm. Functionally, involved in the modulation of the activity of the glucose-phosphotransferase system (glucose-PTS). Interacts with the transcriptional repressor Mlc, preventing its interaction with DNA and leading to the modulation of expression of genes regulated by Mlc, including ptsG, which encodes the PTS system glucose-specific EIICB component. In terms of biological role, shows zinc-dependent metallopeptidase activity. The polypeptide is Mlc titration factor A (Salmonella typhi).